Here is a 2035-residue protein sequence, read N- to C-terminus: MFKGLSKGSQGKGSPKGSPAKGSPKGSPNKHNRAATQELALLISRMQANADQVERDILETQKKLQQDRQNGEQNQALQHQQETGRNLKEAEVLLKDLFLDVDKARRLKHPQAEEIEKDIKQLHERVTQECSEYRALYEKMVLPPDVGPRVDWARVLEQKQNLVREGHYGPGMAELEQQVAEHNILQREIEAYGQQLRTLVGPDANTIRNQYRELLKAASWRRQSLGSLYTHLQGCTKQLSALADQQGRILQQDWSDLMPDPAGVRREYEHFKQHELLAQERSINQLEDDADRMVELGHPAIGPIQVHQEALKMEWQNFLNLCICQESQLQRVEDYRRFQEEADSVSQTLAKLSSNLDTKYGFGTGDSSGSPTELLLQLEAEEKQLAIAERAVGDLQQRSQEVAPLPQRRNPSKQPLHVDSICDWDSGEVQLLRGERYTLKDNADPYTWLVQGPGGETKSAPAACLCIPAPDPEAVAKASRLATELQTLKQKLSTEKNRLKAAAVEHLQPGQQAPAGSAPADPQGQTLLSQMTQLDGDLGQIERQVLSWARSPLSQSSSLKDLEGRIHSCEGTAQRLQSLGAEKEAAQQECEAFLSTKPTGSAALQLPVVLNSVKNRYNDVQSLCHLYGEKAKAALGLEKQIQEADRVIQGFEAALALEGPVPEGSGALQERVSELQRQRKELLQQQACVLGLHRQLKATEHACSALQNNFQEFCQDLPRQQRQVRALTDRYHAVGDQLDLREKIVQDASLTYQQLRNSRDNLSSWLEQLPHHRVQPSDGPSQISYKLQAQKRLIQEILGREQDQATVSRLTRDLQEALQDYELQADTYRCSLEPALAVSAPKRLRVISLQESIQAQEKNLAKAYTEVAAAEQQQLRQLEFAKKMLRKKELDEDIQAIHSARQGSGSPAHARTAESEVLKTQLEEERKRVAEVQRDLEEQRQRLLQLRTQQPVARLEEKEVVEFYRDPQLESNLSQAASRVEEEGKRRARLQAELEAVAQKVVHLEGKRKTMQPHLLTKEVTQIERDPGLDSQVTQLHSEMQRLRGENGVLTARLEELKDELLALEQKEMNVKEKVVVKEVVKVEKDLEMVKAAQTLRLQIEEDAARRKGAKETVAKIQARIKDLEQAISSVEPKVIVKEVKKVEQDPGLLKEASRLRSLLEEEKNNNVALARELQELQEKYRVVEKQKPKVQLQERVSEIFQVLPETEQEIRRLRAQLQETGSKKSGVEQEVEKLLPELEVLRAQKPVVEYKEVTQEVVRHEKNPEVLREIDRLKAQLNELVNTNGRSQEQLIRLQGERDEWKRERSKVETKMVSKEVVRHEKDPVLEKEAERLRQEVREAVQRRRATEDAVYELQNKLLLLERRRPEEQIVVQEVVVTQKDPKLREEHSRLSRSLDEEVGRRRQLELEVRQLGARVEEEEARLSFEEDRSKKLAAERELRQLTLKIQELEKRPPALQEKIIMEEVVKLEKDPDLERSTEALRRELDQEKNRVTELHRECQGLQVQVDLLQKTKSQEKTIYKEVIRVEKDPVLEGERARVWEILNRERAARKGREEDVRSLQERIDRAEALRRSWSREEAELQRARDQASQDCGRLQRQLRELEQQKQQKARQLQEEGRLLSQKTESERQKAAQRSQAVTQLEAAILQEKDKIYEKERTLRDLHTKVSREELNQETQTRETNLSTKICILEPETGNDMSPYEAYKRGVIDRGQYLQLQELECDWEEVTTSSPCGEESVLLDRKSGKQYSIEAALRCRRISKEEYHRYKDGRLPISEFALLVAGETKPSSSLSIGSIISKSPVCSPGPQSTGFFSPGLSFGLTEDSFPIAGIYDTTTDNKCSIKAAVAKNMLDPITGQKLLEAQAATGGIVDLLSRERYSVHKAVERGLIENTSTQRLLNAQKAFTGIEDPVTRKRLSVGEAIQKGWMPQESVLPHLLVQHLTGGLIDPKRTGRIPVPQAVLCGMISEDLGQLLQDESGYEKDLTDPITKERLSYKEAMGRCRKDPLSGLLLLPAMLEGYRCYRAASPTLPRSCVR.

Low complexity predominate over residues 1–27; sequence MFKGLSKGSQGKGSPKGSPAKGSPKGS. Disordered regions lie at residues 1 to 37 and 63 to 84; these read MFKG…AATQ and KLQQ…QETG. The globular 1 stretch occupies residues 1–841; the sequence is MFKGLSKGSQ…LEPALAVSAP (841 aa). The segment at 12-28 is 4 X 4 AA tandem repeats of K-G-S-P; it reads KGSPKGSPAKGSPKGSP. Polar residues predominate over residues 71 to 84; that stretch reads GEQNQALQHQQETG. Residues 229 to 330 form a Spectrin repeat; sequence YTHLQGCTKQ…LCICQESQLQ (102 aa). The interval 400–419 is disordered; that stretch reads QEVAPLPQRRNPSKQPLHVD. Residues 413-470 form the SH3 domain; that stretch reads KQPLHVDSICDWDSGEVQLLRGERYTLKDNADPYTWLVQGPGGETKSAPAACLCIPAP. A coiled-coil region spans residues 842-1664; that stretch reads KRLRVISLQE…EKERTLRDLH (823 aa). Residues 842–1674 form a central fibrous rod domain region; sequence KRLRVISLQE…TKVSREELNQ (833 aa). The stretch at 1186–1227 is one Plectin 1 repeat; it reads KQKPKVQLQERVSEIFQVLPETEQEIRRLRAQLQETGSKKSG. The residue at position 1576 (S1576) is a Phosphoserine. Basic and acidic residues predominate over residues 1607 to 1631; that stretch reads KQQKARQLQEEGRLLSQKTESERQK. Residues 1607–1637 form a disordered region; it reads KQQKARQLQEEGRLLSQKTESERQKAAQRSQ. Residues 1675 to 2035 are globular 2; that stretch reads ETQTRETNLS…SPTLPRSCVR (361 aa). The Plectin 2 repeat unit spans residues 1679–1714; the sequence is RETNLSTKICILEPETGNDMSPYEAYKRGVIDRGQY. S1800 bears the Phosphoserine mark. Plectin repeat units lie at residues 1819 to 1856, 1857 to 1894, 1895 to 1932, 1933 to 1970, and 1971 to 2008; these read FGLT…PITG, QKLL…NTST, QRLL…QESV, LPHL…EDLG, and QLLQ…PLSG. S2026 carries the post-translational modification Phosphoserine.

Belongs to the plakin or cytolinker family. In terms of assembly, may form a homodimer or a heterodimer with PPL.

It is found in the cell junction. Its subcellular location is the desmosome. The protein resides in the cornified envelope. It localises to the cytoplasm. The protein localises to the cytoskeleton. Functionally, component of the cornified envelope of keratinocytes. May link the cornified envelope to desmosomes and intermediate filaments. The polypeptide is Envoplakin (Evpl) (Mus musculus (Mouse)).